Reading from the N-terminus, the 768-residue chain is DNA ligase (768 aa).

Residues 30–34 (DAEYD), 79–80 (SL), and E190 contribute to the NAD(+) site. Residue K192 is the N6-AMP-lysine intermediate of the active site. NAD(+) contacts are provided by R213, E250, K367, and K391. Residues C485, C488, C503, and C509 each coordinate Zn(2+). Residues 678 to 767 (AAEQPLSGLS…IPPEIQARMQ (90 aa)) form the BRCT domain.

Belongs to the NAD-dependent DNA ligase family. LigA subfamily. It depends on Mg(2+) as a cofactor. Requires Mn(2+) as cofactor.

It catalyses the reaction NAD(+) + (deoxyribonucleotide)n-3'-hydroxyl + 5'-phospho-(deoxyribonucleotide)m = (deoxyribonucleotide)n+m + AMP + beta-nicotinamide D-nucleotide.. In terms of biological role, DNA ligase that catalyzes the formation of phosphodiester linkages between 5'-phosphoryl and 3'-hydroxyl groups in double-stranded DNA using NAD as a coenzyme and as the energy source for the reaction. It is essential for DNA replication and repair of damaged DNA. The chain is DNA ligase from Magnetococcus marinus (strain ATCC BAA-1437 / JCM 17883 / MC-1).